The chain runs to 324 residues: Probable peptidylglycine alpha-hydroxylating monooxygenase 1 (324 aa).

The N-terminal stretch at 1–22 is a signal peptide; it reads MPRFYLLSSCALLAFATSFCNA. Cystine bridges form between C41-C85 and C73-C101. Residues H66 and H67 each coordinate Cu cation. Cu cation is bound at residue H142. N182 carries an N-linked (GlcNAc...) asparagine glycan. Residues H207, H209, and M284 each contribute to the Cu cation site. C264 and C285 are disulfide-bonded.

It belongs to the copper type II ascorbate-dependent monooxygenase family. Cu(2+) serves as cofactor.

The protein localises to the secreted. It catalyses the reaction a [peptide]-C-terminal glycine + 2 L-ascorbate + O2 = a [peptide]-C-terminal (2S)-2-hydroxyglycine + 2 monodehydro-L-ascorbate radical + H2O. In terms of biological role, monooxygenase that catalyzes an essential reaction in C-terminal alpha-amidation of peptides. Produces an unstable peptidyl(2-hydroxyglycine) intermediate. C-terminal amidation of peptides such as neuropeptides is essential for full biological activity. The sequence is that of Probable peptidylglycine alpha-hydroxylating monooxygenase 1 from Caenorhabditis elegans.